The primary structure comprises 299 residues: tRNA dimethylallyltransferase (299 aa).

ATP is bound at residue 13–20 (GPTASGKT). 15 to 20 (TASGKT) contributes to the substrate binding site. The segment at 38–41 (DSRQ) is interaction with substrate tRNA.

It belongs to the IPP transferase family. In terms of assembly, monomer. Requires Mg(2+) as cofactor.

The enzyme catalyses adenosine(37) in tRNA + dimethylallyl diphosphate = N(6)-dimethylallyladenosine(37) in tRNA + diphosphate. Catalyzes the transfer of a dimethylallyl group onto the adenine at position 37 in tRNAs that read codons beginning with uridine, leading to the formation of N6-(dimethylallyl)adenosine (i(6)A). This is tRNA dimethylallyltransferase from Prochlorococcus marinus (strain AS9601).